The chain runs to 91 residues: Bacterial microcompartment shell protein PduJ (91 aa).

The 85-residue stretch at 4–88 (ALGLVETKGL…PHSDVEAILP (85 aa)) folds into the BMC domain.

This sequence belongs to the bacterial microcompartments protein family. In terms of assembly, homohexamer with a central pore. Interacts with PduP, which targets PduP to the BMC. Interacts with shell protein PduA.

It is found in the bacterial microcompartment. It participates in polyol metabolism; 1,2-propanediol degradation. Its function is as follows. One of the major shell proteins of the bacterial microcompartment (BMC) dedicated to 1,2-propanediol (1,2-PD) degradation. At least one of PduA or PduJ is required for BMC assembly; it must be encoded as the first gene in the pdu operon. Required for structural integrity of BMCs and to mitigate propionaldehyde toxicity, probably joins facets responsible for BMC closure. Probably the hub for binding multiple enzymes to the interior of the BMC. Functionally, expression of a cosmid containing the full 21-gene pdu operon in E.coli allows E.coli to grow on 1,2-PD with the appearance of BMCs in its cytoplasm. Overexpression of this protein leads to an internal structure with a whorled architecture. In terms of biological role, the 1,2-PD-specific bacterial microcompartment (BMC) concentrates low levels of 1,2-PD catabolic enzymes, concentrates volatile reaction intermediates thus enhancing pathway flux and keeps the level of toxic, mutagenic propionaldehyde low. This chain is Bacterial microcompartment shell protein PduJ, found in Citrobacter freundii.